We begin with the raw amino-acid sequence, 229 residues long: Uracil-DNA glycosylase (229 aa).

The Proton acceptor role is filled by Asp-70.

Belongs to the uracil-DNA glycosylase (UDG) superfamily. UNG family.

The protein resides in the cytoplasm. It catalyses the reaction Hydrolyzes single-stranded DNA or mismatched double-stranded DNA and polynucleotides, releasing free uracil.. Excises uracil residues from the DNA which can arise as a result of misincorporation of dUMP residues by DNA polymerase or due to deamination of cytosine. This chain is Uracil-DNA glycosylase, found in Chlamydia trachomatis serovar L2b (strain UCH-1/proctitis).